The following is a 208-amino-acid chain: Type 3 secretion system stator protein (208 aa).

It belongs to the SctL stator family. In terms of assembly, the core secretion machinery of the T3SS is composed of approximately 20 different proteins, including cytoplasmic components, a base, an export apparatus and a needle. This subunit is part of the cytosolic complex.

It is found in the cytoplasm. In terms of biological role, component of the type III secretion system (T3SS), also called injectisome, which is used to inject bacterial effector proteins into eukaryotic host cells. Acts as a regulator of the HrcN/SctN ATPase activity. This Sinorhizobium fredii (strain NBRC 101917 / NGR234) protein is Type 3 secretion system stator protein.